The following is a 216-amino-acid chain: ATP-dependent Clp protease proteolytic subunit (216 aa).

Residue Ser101 is the Nucleophile of the active site. Residue His126 is part of the active site.

It belongs to the peptidase S14 family. As to quaternary structure, component of the chloroplastic Clp protease core complex.

It localises to the plastid. It is found in the chloroplast stroma. It carries out the reaction Hydrolysis of proteins to small peptides in the presence of ATP and magnesium. alpha-casein is the usual test substrate. In the absence of ATP, only oligopeptides shorter than five residues are hydrolyzed (such as succinyl-Leu-Tyr-|-NHMec, and Leu-Tyr-Leu-|-Tyr-Trp, in which cleavage of the -Tyr-|-Leu- and -Tyr-|-Trp bonds also occurs).. Its function is as follows. Cleaves peptides in various proteins in a process that requires ATP hydrolysis. Has a chymotrypsin-like activity. Plays a major role in the degradation of misfolded proteins. The protein is ATP-dependent Clp protease proteolytic subunit of Hordeum vulgare (Barley).